A 22-amino-acid polypeptide reads, in one-letter code: Proline-rich peptide (22 aa).

Residues 1–22 (FVDRNRIPRSNNGPKIPIISNP) are disordered.

The protein resides in the secreted. Functionally, antibacterial peptide active against Gram-positive bacterium M.luteus and Gram-negative bacterium E.coli. This Calliphora vicina (Blue blowfly) protein is Proline-rich peptide.